The chain runs to 471 residues: Cysteine--tRNA ligase (471 aa).

Cys29 contributes to the Zn(2+) binding site. The 'HIGH' region motif lies at 31 to 41 (PTVYNYIHIGN). Zn(2+)-binding residues include Cys209, His234, and Glu238. Residues 266 to 270 (KMSKS) carry the 'KMSKS' region motif. Position 269 (Lys269) interacts with ATP.

It belongs to the class-I aminoacyl-tRNA synthetase family. In terms of assembly, monomer. Requires Zn(2+) as cofactor.

It is found in the cytoplasm. It catalyses the reaction tRNA(Cys) + L-cysteine + ATP = L-cysteinyl-tRNA(Cys) + AMP + diphosphate. The chain is Cysteine--tRNA ligase from Listeria innocua serovar 6a (strain ATCC BAA-680 / CLIP 11262).